Here is a 119-residue protein sequence, read N- to C-terminus: Small ribosomal subunit protein bS6 (119 aa).

The tract at residues 95 to 119 (AVTEPSPLAKGNEKREDRKESEDAE) is disordered. Over residues 105–119 (GNEKREDRKESEDAE) the composition is skewed to basic and acidic residues.

This sequence belongs to the bacterial ribosomal protein bS6 family.

Functionally, binds together with bS18 to 16S ribosomal RNA. This chain is Small ribosomal subunit protein bS6, found in Halorhodospira halophila (strain DSM 244 / SL1) (Ectothiorhodospira halophila (strain DSM 244 / SL1)).